The primary structure comprises 1710 residues: Phosphatidylinositol 4-phosphate 5-kinase (1710 aa).

One can recognise an EF-hand domain in the interval 68-98 (YKSIFKAFDLNNDNYLDFYEFCVAINIMLKG). Positions 76, 78, 80, 82, and 87 each coordinate Ca(2+). 3 disordered regions span residues 139–255 (NNMN…DPIN), 427–479 (KQKK…IKSV), and 895–993 (GEGH…HNNN). The span at 140-235 (NMNGDNINGD…HNNNSHNNNN (96 aa)) shows a compositional bias: low complexity. A compositionally biased stretch (polar residues) spans 236-248 (KAENSLGQPLNEK). A compositionally biased stretch (basic residues) spans 427 to 444 (KQKKKKKKKKKKKKKKEK). Over residues 456 to 468 (SSSMENKSQNKSQ) the composition is skewed to low complexity. Positions 902–973 (EEEEKNDDEE…DDNDDNDDND (72 aa)) are enriched in acidic residues. Residues 974–987 (EKSNIKIENKKDVP) show a composition bias toward basic and acidic residues. Residues 1334-1709 (QKKTFHRILA…RFVTFIENHM (376 aa)) form the PIPK domain.

It catalyses the reaction a 1,2-diacyl-sn-glycero-3-phospho-(1D-myo-inositol 4-phosphate) + ATP = a 1,2-diacyl-sn-glycero-3-phospho-(1D-myo-inositol-4,5-bisphosphate) + ADP + H(+). Its activity is regulated as follows. Catalytic activity is increase by myristoylated ARF1. Phosphatidic acid has no effect on catalytic activity. Its function is as follows. Catalyzes the phosphorylation of phosphatidylinositol 4-phosphate (PtdIns(4)P/PI4P) to form phosphatidylinositol 4,5-bisphosphate (PtdIns(4,5)P2/PIP2), a lipid second messenger that regulates several cellular processes. In Plasmodium falciparum (isolate 3D7), this protein is Phosphatidylinositol 4-phosphate 5-kinase.